Here is a 255-residue protein sequence, read N- to C-terminus: tRNA (guanine-N(1)-)-methyltransferase (255 aa).

S-adenosyl-L-methionine is bound by residues glycine 114 and 134–139; that span reads IGDYIL.

Belongs to the RNA methyltransferase TrmD family. As to quaternary structure, homodimer.

It is found in the cytoplasm. It carries out the reaction guanosine(37) in tRNA + S-adenosyl-L-methionine = N(1)-methylguanosine(37) in tRNA + S-adenosyl-L-homocysteine + H(+). Specifically methylates guanosine-37 in various tRNAs. This chain is tRNA (guanine-N(1)-)-methyltransferase, found in Blochmanniella pennsylvanica (strain BPEN).